The sequence spans 283 residues: Probable aquaporin NIP4-2 (283 aa).

Position 1 is an N-acetylmethionine (M1). Basic and acidic residues predominate over residues 1–21; the sequence is MTSHGEEIEDEQISRIEKGNC. The segment at 1 to 23 is disordered; that stretch reads MTSHGEEIEDEQISRIEKGNCKD. 2 helical membrane-spanning segments follow: residues 51 to 71 and 77 to 97; these read GTYFIIFSGCGVVVVNVLYGG and GICVTWGLIVMVMIYSTGHIS. Positions 102–104 match the NPA 1 motif; the sequence is NPA. Transmembrane regions (helical) follow at residues 120-140, 161-181, and 189-209; these read VPLYIGAQLTGSLLASLTLRL, ALVAEIIISFLLMFVISGVAT, and LAGIAVGMTIILNVFVAGPIS. The NPA 2 motif lies at 214 to 216; the sequence is NPA. Residues 231 to 251 traverse the membrane as a helical segment; it reads IWVYIVGPFVGIFAGGFVYNF. S267 bears the Phosphoserine mark.

This sequence belongs to the MIP/aquaporin (TC 1.A.8) family. NIP (TC 1.A.8.12) subfamily.

It is found in the membrane. Functionally, aquaporins facilitate the transport of water and small neutral solutes across cell membranes. The protein is Probable aquaporin NIP4-2 (NIP4-2) of Arabidopsis thaliana (Mouse-ear cress).